A 377-amino-acid chain; its full sequence is WAT1-related protein At5g13670 (377 aa).

The next 10 membrane-spanning stretches (helical) occupy residues 9 to 29, 38 to 58, 64 to 84, 99 to 119, 136 to 156, 187 to 207, 214 to 234, 251 to 271, 279 to 299, and 303 to 323; these read FIAIVFIQCLYALMSIVAKLA, VLVAYRMAVASALITPFALIL, PKLTFKILLQIAILSLFEPVV, TFTSALCNALPAMTFIMACVF, VGTMVAIGGAMLMTFVKGNVI, IMLVASCFSWSCYIILQAKIL, LSLTALMCIMGMLEATVMGLI, LLASIYGGLVSGLAYYVIGWA, FVSAFNPLSMVLVAILSTFVF, and VYVGRVIGSVVIVIGIYLVLW. EamA domains are found at residues 18 to 149 and 194 to 322; these read LYAL…MLMT and FSWS…YLVL.

This sequence belongs to the drug/metabolite transporter (DMT) superfamily. Plant drug/metabolite exporter (P-DME) (TC 2.A.7.4) family.

It is found in the membrane. In Arabidopsis thaliana (Mouse-ear cress), this protein is WAT1-related protein At5g13670.